A 375-amino-acid chain; its full sequence is 23S rRNA (uracil(747)-C(5))-methyltransferase RlmC (375 aa).

The [4Fe-4S] cluster site is built by Cys3, Cys11, Cys14, and Cys87. S-adenosyl-L-methionine is bound by residues Gln212, Phe241, Glu262, and Asn307. The active-site Nucleophile is Cys334.

It belongs to the class I-like SAM-binding methyltransferase superfamily. RNA M5U methyltransferase family. RlmC subfamily.

It carries out the reaction uridine(747) in 23S rRNA + S-adenosyl-L-methionine = 5-methyluridine(747) in 23S rRNA + S-adenosyl-L-homocysteine + H(+). Functionally, catalyzes the formation of 5-methyl-uridine at position 747 (m5U747) in 23S rRNA. The polypeptide is 23S rRNA (uracil(747)-C(5))-methyltransferase RlmC (Salmonella typhi).